The chain runs to 399 residues: F420-dependent formate dehydrogenase subunit beta (399 aa).

2 consecutive 4Fe-4S ferredoxin-type domains span residues 287–307 and 339–367; these read TEYM…EACP and ERML…LAKI. Residues Cys-296, Cys-299, Cys-302, Cys-306, Cys-348, Cys-351, Cys-354, and Cys-358 each coordinate [4Fe-4S] cluster.

This sequence belongs to the FrhB family. In terms of assembly, dimer of an alpha (FdhA) and a beta (FdhB) subunit. Requires [4Fe-4S] cluster as cofactor. FAD serves as cofactor. It depends on Zn(2+) as a cofactor.

The enzyme catalyses oxidized coenzyme F420-(gamma-L-Glu)(n) + formate + 2 H(+) = reduced coenzyme F420-(gamma-L-Glu)(n) + CO2. Is extremely sensitive to oxygen. Contains a FAD that is required for coenzyme F420-dependent activity but not for methyl viologen-dependent activity. Preincubation of the FAD-depleted enzyme with FAD restores coenzyme F420-dependent activity. Neither FMN nor FADH2 can replace FAD. Strongly inhibited by cyanide, azide, alpha,alpha-dipyridyl and 1,10-phenanthroline. Its function is as follows. Catalyzes the oxidation of formate to carbon dioxide, with coenzyme F420 as the electron acceptor. In vitro can also use methyl viologen, 7,8-didemethyl-8-hydroxy-5-deazariboflavin (or FO, a hydrolytic derivative of coenzyme F420), FMN and FAD as electron acceptors, but not NAD(+) or NADP(+). The polypeptide is F420-dependent formate dehydrogenase subunit beta (Methanobacterium formicicum).